The sequence spans 178 residues: Gamma-crystallin S (178 aa).

Ser-2 is subject to N-acetylserine. An N-terminal arm region spans residues 2–5; the sequence is SKAG. Beta/gamma crystallin 'Greek key' domains follow at residues 6–44 and 45–87; these read TKIT…RVEG and GTWA…RAVH. A connecting peptide region spans residues 88-93; that stretch reads LSSGGQ. Beta/gamma crystallin 'Greek key' domains are found at residues 94 to 134 and 135 to 177; these read YKLQ…KVLE and GAWI…RRIV.

The protein belongs to the beta/gamma-crystallin family. As to quaternary structure, monomer.

Its function is as follows. Crystallins are the dominant structural components of the vertebrate eye lens. The sequence is that of Gamma-crystallin S (CRYGS) from Bos taurus (Bovine).